The sequence spans 299 residues: GTPase Era (299 aa).

In terms of domain architecture, Era-type G spans 9 to 177 (RSGSVAVIGR…VGDLLKLVPE (169 aa)). A G1 region spans residues 17–24 (GRPNVGKS). 17-24 (GRPNVGKS) provides a ligand contact to GTP. The interval 43–47 (QTTRH) is G2. The G3 stretch occupies residues 64 to 67 (DTPG). GTP is bound by residues 64–68 (DTPGL) and 126–129 (NKVD). The tract at residues 126–129 (NKVD) is G4. A G5 region spans residues 156 to 158 (VSA). The region spanning 200–284 (VREQLMRQLG…FLETWVRVRE (85 aa)) is the KH type-2 domain.

Belongs to the TRAFAC class TrmE-Era-EngA-EngB-Septin-like GTPase superfamily. Era GTPase family. As to quaternary structure, monomer.

It localises to the cytoplasm. It is found in the cell inner membrane. Functionally, an essential GTPase that binds both GDP and GTP, with rapid nucleotide exchange. Plays a role in 16S rRNA processing and 30S ribosomal subunit biogenesis and possibly also in cell cycle regulation and energy metabolism. This chain is GTPase Era, found in Xanthomonas axonopodis pv. citri (strain 306).